Reading from the N-terminus, the 271-residue chain is uncharacterized protein (271 aa).

This sequence belongs to the metallo-dependent hydrolases superfamily. Peptidase M19 family.

This is an uncharacterized protein from Klebsiella pneumoniae.